Here is a 139-residue protein sequence, read N- to C-terminus: D-ribose pyranase (139 aa).

The active-site Proton donor is His-20. Substrate-binding positions include Asp-28, His-106, and 128-130 (YAN).

Belongs to the RbsD / FucU family. RbsD subfamily. Homodecamer.

The protein localises to the cytoplasm. It catalyses the reaction beta-D-ribopyranose = beta-D-ribofuranose. It functions in the pathway carbohydrate metabolism; D-ribose degradation; D-ribose 5-phosphate from beta-D-ribopyranose: step 1/2. Its function is as follows. Catalyzes the interconversion of beta-pyran and beta-furan forms of D-ribose. The chain is D-ribose pyranase from Photorhabdus laumondii subsp. laumondii (strain DSM 15139 / CIP 105565 / TT01) (Photorhabdus luminescens subsp. laumondii).